Here is a 294-residue protein sequence, read N- to C-terminus: Nucleotide-binding protein Smal_0950 (294 aa).

Position 16-23 (glycine 16–serine 23) interacts with ATP. Aspartate 69–glycine 72 lines the GTP pocket.

The protein belongs to the RapZ-like family.

Functionally, displays ATPase and GTPase activities. The chain is Nucleotide-binding protein Smal_0950 from Stenotrophomonas maltophilia (strain R551-3).